Consider the following 161-residue polypeptide: MPSFDVVSEVDKHELTNAVDQANRELDTRFDFKGVEARFELEDGKVINQSAPSDFQIKQMTDILRARLLARGIDIRCLEFGDVETNLAGARQKVTVKQGIEQKQAKQLVAKLKEAKLKVEAQINGDKLRVTGKKRDDLQDAIALLKKADFELPLQFDNFRD.

Belongs to the YajQ family.

Nucleotide-binding protein. This Xanthomonas axonopodis pv. citri (strain 306) protein is Nucleotide-binding protein XAC3671.